A 360-amino-acid chain; its full sequence is Photosystem II protein D1 (360 aa).

3 consecutive transmembrane segments (helical) span residues 29 to 46 (YIGW…TATT), 118 to 133 (HFLL…EWEL), and 142 to 156 (WIAV…AATA). Histidine 118 lines the chlorophyll a pocket. Tyrosine 126 contributes to the pheophytin a binding site. Residues aspartate 170 and glutamate 189 each contribute to the [CaMn4O5] cluster site. The helical transmembrane segment at 197 to 218 (FHMMGVAGVFGGSLFSAMHGSL) threads the bilayer. Chlorophyll a is bound at residue histidine 198. A quinone is bound by residues histidine 215 and 264-265 (SF). Histidine 215 contacts Fe cation. Histidine 272 contributes to the Fe cation binding site. Residues 274-288 (FLALWPVVGIWFTAL) traverse the membrane as a helical segment. [CaMn4O5] cluster contacts are provided by histidine 332, glutamate 333, aspartate 342, and alanine 344. Positions 345 to 360 (SGEVMPVALTAPSINA) are excised as a propeptide.

Belongs to the reaction center PufL/M/PsbA/D family. In terms of assembly, PSII is composed of 1 copy each of membrane proteins PsbA, PsbB, PsbC, PsbD, PsbE, PsbF, PsbH, PsbI, PsbJ, PsbK, PsbL, PsbM, PsbT, PsbX, PsbY, PsbZ, Psb30/Ycf12, at least 3 peripheral proteins of the oxygen-evolving complex and a large number of cofactors. It forms dimeric complexes. It depends on The D1/D2 heterodimer binds P680, chlorophylls that are the primary electron donor of PSII, and subsequent electron acceptors. It shares a non-heme iron and each subunit binds pheophytin, quinone, additional chlorophylls, carotenoids and lipids. D1 provides most of the ligands for the Mn4-Ca-O5 cluster of the oxygen-evolving complex (OEC). There is also a Cl(-1) ion associated with D1 and D2, which is required for oxygen evolution. The PSII complex binds additional chlorophylls, carotenoids and specific lipids. as a cofactor. In terms of processing, tyr-161 forms a radical intermediate that is referred to as redox-active TyrZ, YZ or Y-Z. Post-translationally, C-terminally processed by CTPA; processing is essential to allow assembly of the oxygen-evolving complex and thus photosynthetic growth.

Its subcellular location is the plastid. The protein localises to the cyanelle thylakoid membrane. The catalysed reaction is 2 a plastoquinone + 4 hnu + 2 H2O = 2 a plastoquinol + O2. In terms of biological role, photosystem II (PSII) is a light-driven water:plastoquinone oxidoreductase that uses light energy to abstract electrons from H(2)O, generating O(2) and a proton gradient subsequently used for ATP formation. It consists of a core antenna complex that captures photons, and an electron transfer chain that converts photonic excitation into a charge separation. The D1/D2 (PsbA/PsbD) reaction center heterodimer binds P680, the primary electron donor of PSII as well as several subsequent electron acceptors. In Cyanophora paradoxa, this protein is Photosystem II protein D1.